A 542-amino-acid chain; its full sequence is Phosphoenolpyruvate carboxykinase (ATP) (542 aa).

3 residues coordinate substrate: arginine 67, tyrosine 208, and lysine 214. ATP-binding positions include lysine 214, histidine 233, and 249-257; that span reads GLSGTGKTT. 2 residues coordinate Mn(2+): lysine 214 and histidine 233. Residue aspartate 270 coordinates Mn(2+). ATP is bound by residues glutamate 298, arginine 334, 450–451, and threonine 456; that span reads RI. Arginine 334 lines the substrate pocket.

It belongs to the phosphoenolpyruvate carboxykinase (ATP) family. As to quaternary structure, monomer. It depends on Mn(2+) as a cofactor.

Its subcellular location is the cytoplasm. The enzyme catalyses oxaloacetate + ATP = phosphoenolpyruvate + ADP + CO2. Its pathway is carbohydrate biosynthesis; gluconeogenesis. Its function is as follows. Involved in the gluconeogenesis. Catalyzes the conversion of oxaloacetate (OAA) to phosphoenolpyruvate (PEP) through direct phosphoryl transfer between the nucleoside triphosphate and OAA. This is Phosphoenolpyruvate carboxykinase (ATP) from Vibrio vulnificus (strain CMCP6).